A 209-amino-acid polypeptide reads, in one-letter code: uncharacterized protein (209 aa).

One can recognise a Nudix hydrolase domain in the interval 1 to 167 (MRNSAGLFMI…LNTYASSNYG (167 aa)).

This is an uncharacterized protein from Orgyia pseudotsugata (Douglas-fir tussock moth).